Reading from the N-terminus, the 161-residue chain is MRNSSNKYLDLPYRPGVGMMILNADNQIFVGKRIDTKISSWQMPQGGIVPGETPSIAAMREMLEEIGSNKGYIIAESKCWYSYDVPSFLIPKLWNGNFRGQKQRWFLIRFTGNNKDINIHTSNPEFDQWRWTSLDELLSIIIPFKRKLYQAVVKEFESLIQ.

The 143-residue stretch at 12–154 (PYRPGVGMMI…KRKLYQAVVK (143 aa)) folds into the Nudix hydrolase domain. The Nudix box signature appears at 46–67 (GGIVPGETPSIAAMREMLEEIG).

This sequence belongs to the Nudix hydrolase family. RppH subfamily. As to quaternary structure, monomer. It depends on Mg(2+) as a cofactor. Requires Zn(2+) as cofactor.

Functionally, accelerates the degradation of transcripts by removing pyrophosphate from the 5'-end of triphosphorylated RNA, leading to a more labile monophosphorylated state that can stimulate subsequent ribonuclease cleavage. Preferentially hydrolyzes diadenosine penta-phosphate with ATP as one of the reaction products. Also able to hydrolyze diadenosine hexa-phosphate and diguanosine penta-phosphate. Has little or no activity on diadenosine tetra- and tri-phosphate, on diguanosine tetra- and tri-phosphate, on GDP-mannose, ADP-ribose, NADH and NAD(+). The chain is RNA pyrophosphohydrolase (rppH) from Rickettsia prowazekii (strain Madrid E).